We begin with the raw amino-acid sequence, 684 residues long: DNA-directed RNA polymerase subunit beta' (684 aa).

Residues cysteine 69, cysteine 71, cysteine 87, and cysteine 90 each contribute to the Zn(2+) site. Positions 489, 491, and 493 each coordinate Mg(2+).

Belongs to the RNA polymerase beta' chain family. RpoC1 subfamily. As to quaternary structure, in plastids the minimal PEP RNA polymerase catalytic core is composed of four subunits: alpha, beta, beta', and beta''. When a (nuclear-encoded) sigma factor is associated with the core the holoenzyme is formed, which can initiate transcription. It depends on Mg(2+) as a cofactor. Zn(2+) is required as a cofactor.

It is found in the plastid. The protein localises to the chloroplast. It catalyses the reaction RNA(n) + a ribonucleoside 5'-triphosphate = RNA(n+1) + diphosphate. DNA-dependent RNA polymerase catalyzes the transcription of DNA into RNA using the four ribonucleoside triphosphates as substrates. The protein is DNA-directed RNA polymerase subunit beta' of Morus indica (Mulberry).